The following is a 223-amino-acid chain: Putative NAD(P)H nitroreductase SAUSA300_2462 (223 aa).

It belongs to the nitroreductase family. FMN serves as cofactor.

In Staphylococcus aureus (strain USA300), this protein is Putative NAD(P)H nitroreductase SAUSA300_2462.